The following is a 491-amino-acid chain: Probable glycine dehydrogenase (decarboxylating) subunit 2 (491 aa).

Lys-273 is subject to N6-(pyridoxal phosphate)lysine.

The protein belongs to the GcvP family. C-terminal subunit subfamily. The glycine cleavage system is composed of four proteins: P, T, L and H. In this organism, the P 'protein' is a heterodimer of two subunits. Pyridoxal 5'-phosphate serves as cofactor.

It carries out the reaction N(6)-[(R)-lipoyl]-L-lysyl-[glycine-cleavage complex H protein] + glycine + H(+) = N(6)-[(R)-S(8)-aminomethyldihydrolipoyl]-L-lysyl-[glycine-cleavage complex H protein] + CO2. Its function is as follows. The glycine cleavage system catalyzes the degradation of glycine. The P protein binds the alpha-amino group of glycine through its pyridoxal phosphate cofactor; CO(2) is released and the remaining methylamine moiety is then transferred to the lipoamide cofactor of the H protein. In Bacillus velezensis (strain DSM 23117 / BGSC 10A6 / LMG 26770 / FZB42) (Bacillus amyloliquefaciens subsp. plantarum), this protein is Probable glycine dehydrogenase (decarboxylating) subunit 2.